We begin with the raw amino-acid sequence, 500 residues long: Histidine--tRNA ligase (500 aa).

It belongs to the class-II aminoacyl-tRNA synthetase family. As to quaternary structure, homodimer.

It is found in the cytoplasm. It catalyses the reaction tRNA(His) + L-histidine + ATP = L-histidyl-tRNA(His) + AMP + diphosphate + H(+). This chain is Histidine--tRNA ligase, found in Ruegeria sp. (strain TM1040) (Silicibacter sp.).